Reading from the N-terminus, the 701-residue chain is Elongation factor G (701 aa).

The tr-type G domain occupies 8-286; the sequence is ERIRNIGIIA…AVVYYLPSPV (279 aa). GTP is bound by residues 17–24, 85–89, and 139–142; these read AHIDAGKT, DTPGH, and NKMD.

This sequence belongs to the TRAFAC class translation factor GTPase superfamily. Classic translation factor GTPase family. EF-G/EF-2 subfamily.

The protein localises to the cytoplasm. Catalyzes the GTP-dependent ribosomal translocation step during translation elongation. During this step, the ribosome changes from the pre-translocational (PRE) to the post-translocational (POST) state as the newly formed A-site-bound peptidyl-tRNA and P-site-bound deacylated tRNA move to the P and E sites, respectively. Catalyzes the coordinated movement of the two tRNA molecules, the mRNA and conformational changes in the ribosome. In Roseiflexus castenholzii (strain DSM 13941 / HLO8), this protein is Elongation factor G.